We begin with the raw amino-acid sequence, 512 residues long: Glutathione-binding protein GsiB (512 aa).

An N-terminal signal peptide occupies residues 1 to 26 (MTQFITHKWLAALGLASSIAAFPALA).

The protein belongs to the bacterial solute-binding protein 5 family. As to quaternary structure, the complex is composed of two ATP-binding proteins (GsiA), two transmembrane proteins (GsiC and GsiD) and a solute-binding protein (GsiB).

It is found in the periplasm. Functionally, part of the ABC transporter complex GsiABCD involved in glutathione import. Binds glutathione. This chain is Glutathione-binding protein GsiB, found in Salmonella paratyphi A (strain ATCC 9150 / SARB42).